We begin with the raw amino-acid sequence, 445 residues long: Ribosomal protein uS12 methylthiotransferase RimO (445 aa).

The MTTase N-terminal domain maps to 4 to 119; it reads YKVGMVSLGC…INEAIMNFIN (116 aa). Positions 13, 48, 82, 157, 161, and 164 each coordinate [4Fe-4S] cluster. Residues 143-373 enclose the Radical SAM core domain; sequence TTDKATAYLR…MLLQKEVSEE (231 aa). The TRAM domain maps to 376 to 441; it reads KNKVGREYDV…EYDLVGVVCN (66 aa).

The protein belongs to the methylthiotransferase family. RimO subfamily. It depends on [4Fe-4S] cluster as a cofactor.

It localises to the cytoplasm. It catalyses the reaction L-aspartate(89)-[ribosomal protein uS12]-hydrogen + (sulfur carrier)-SH + AH2 + 2 S-adenosyl-L-methionine = 3-methylsulfanyl-L-aspartate(89)-[ribosomal protein uS12]-hydrogen + (sulfur carrier)-H + 5'-deoxyadenosine + L-methionine + A + S-adenosyl-L-homocysteine + 2 H(+). Functionally, catalyzes the methylthiolation of an aspartic acid residue of ribosomal protein uS12. This chain is Ribosomal protein uS12 methylthiotransferase RimO, found in Clostridium perfringens (strain 13 / Type A).